The primary structure comprises 220 residues: MGLFGKTQERPPKDLVNEWSLKIRKEMRVIDRQIRDIQREQEKVKRSIKESAKKGNREACVILAKEVVHSKKAVNKLYASKAHMNSVLMSMKNQLAVLRVSGSLQKSTEVMKAMQNLVKIPEIQATMRDLSKEMMKAGIIEEMLEDTFEGMEDQDEMEEQAEMEIDRILFEITAGALGKAPSKVTDALPEPEITGAMAASDEEEEEDLEAMQSRLAALRS.

G2 is lipidated: N-myristoyl glycine. A coiled-coil region spans residues 22–54 (KIRKEMRVIDRQIRDIQREQEKVKRSIKESAKK). The important for autoinhibitory function stretch occupies residues 168–169 (IL). The segment at 196–220 (AMAASDEEEEEDLEAMQSRLAALRS) is disordered. A coiled-coil region spans residues 197-220 (MAASDEEEEEDLEAMQSRLAALRS). The segment covering 200–209 (SDEEEEEDLE) has biased composition (acidic residues). Residues 201–209 (DEEEEEDLE) carry the MIT-interacting motif motif. Interaction with STAMBP regions lie at residues 203–207 (EEEED) and 219–220 (RS).

It belongs to the SNF7 family. Probable core component of the endosomal sorting required for transport complex III (ESCRT-III). ESCRT-III components are thought to multimerize to form a flat lattice on the perimeter membrane of the endosome. Several assembly forms of ESCRT-III may exist that interact and act sequentially.

It is found in the cytoplasm. It localises to the cytosol. The protein resides in the membrane. Its subcellular location is the endosome. The protein localises to the late endosome membrane. In terms of biological role, probable core component of the endosomal sorting required for transport complex III (ESCRT-III) which is involved in multivesicular bodies (MVBs) formation and sorting of endosomal cargo proteins into MVBs. MVBs contain intraluminal vesicles (ILVs) that are generated by invagination and scission from the limiting membrane of the endosome and mostly are delivered to lysosomes enabling degradation of membrane proteins, such as stimulated growth factor receptors, lysosomal enzymes and lipids. Involved in late stages of cytokinesis. Plays a role in endosomal sorting/trafficking of EGF receptor. The protein is Charged multivesicular body protein 3 (chmp3) of Xenopus tropicalis (Western clawed frog).